Consider the following 296-residue polypeptide: NH(3)-dependent NAD(+) synthetase (296 aa).

ATP is bound at residue 30-37; that stretch reads GVSGGLDS. Asp36 contributes to the Mg(2+) binding site. Arg157 serves as a coordination point for deamido-NAD(+). Glu182 is a binding site for Mg(2+). Deamido-NAD(+) contacts are provided by Lys190 and Asp197. Lys206 and Ser228 together coordinate ATP.

The protein belongs to the NAD synthetase family. In terms of assembly, homodimer.

The enzyme catalyses deamido-NAD(+) + NH4(+) + ATP = AMP + diphosphate + NAD(+) + H(+). It functions in the pathway cofactor biosynthesis; NAD(+) biosynthesis; NAD(+) from deamido-NAD(+) (ammonia route): step 1/1. In terms of biological role, catalyzes the ATP-dependent amidation of deamido-NAD to form NAD. Uses ammonia as a nitrogen source. This is NH(3)-dependent NAD(+) synthetase from Coprothermobacter proteolyticus (strain ATCC 35245 / DSM 5265 / OCM 4 / BT).